We begin with the raw amino-acid sequence, 329 residues long: Methionyl-tRNA formyltransferase (329 aa).

Residue 112-115 (SILP) participates in (6S)-5,6,7,8-tetrahydrofolate binding.

Belongs to the Fmt family.

It carries out the reaction L-methionyl-tRNA(fMet) + (6R)-10-formyltetrahydrofolate = N-formyl-L-methionyl-tRNA(fMet) + (6S)-5,6,7,8-tetrahydrofolate + H(+). Functionally, attaches a formyl group to the free amino group of methionyl-tRNA(fMet). The formyl group appears to play a dual role in the initiator identity of N-formylmethionyl-tRNA by promoting its recognition by IF2 and preventing the misappropriation of this tRNA by the elongation apparatus. The protein is Methionyl-tRNA formyltransferase of Shewanella sediminis (strain HAW-EB3).